Here is a 161-residue protein sequence, read N- to C-terminus: 2-C-methyl-D-erythritol 2,4-cyclodiphosphate synthase (161 aa).

The a divalent metal cation site is built by Asp-14 and His-16. 4-CDP-2-C-methyl-D-erythritol 2-phosphate is bound by residues 14 to 16 (DVH) and 40 to 41 (HS). Residue His-48 participates in a divalent metal cation binding. Residues 62–64 (DLG), Phe-142, and Arg-145 contribute to the 4-CDP-2-C-methyl-D-erythritol 2-phosphate site.

This sequence belongs to the IspF family. As to quaternary structure, homotrimer. It depends on a divalent metal cation as a cofactor.

It catalyses the reaction 4-CDP-2-C-methyl-D-erythritol 2-phosphate = 2-C-methyl-D-erythritol 2,4-cyclic diphosphate + CMP. Its pathway is isoprenoid biosynthesis; isopentenyl diphosphate biosynthesis via DXP pathway; isopentenyl diphosphate from 1-deoxy-D-xylulose 5-phosphate: step 4/6. Its function is as follows. Involved in the biosynthesis of isopentenyl diphosphate (IPP) and dimethylallyl diphosphate (DMAPP), two major building blocks of isoprenoid compounds. Catalyzes the conversion of 4-diphosphocytidyl-2-C-methyl-D-erythritol 2-phosphate (CDP-ME2P) to 2-C-methyl-D-erythritol 2,4-cyclodiphosphate (ME-CPP) with a corresponding release of cytidine 5-monophosphate (CMP). The sequence is that of 2-C-methyl-D-erythritol 2,4-cyclodiphosphate synthase from Acidothermus cellulolyticus (strain ATCC 43068 / DSM 8971 / 11B).